The primary structure comprises 505 residues: Argininosuccinate lyase (505 aa).

Belongs to the lyase 1 family. Argininosuccinate lyase subfamily.

The protein localises to the cytoplasm. The catalysed reaction is 2-(N(omega)-L-arginino)succinate = fumarate + L-arginine. It participates in amino-acid biosynthesis; L-arginine biosynthesis; L-arginine from L-ornithine and carbamoyl phosphate: step 3/3. This is Argininosuccinate lyase from Rhodococcoides fascians (Rhodococcus fascians).